Consider the following 98-residue polypeptide: Cell division protein FtsB (98 aa).

Over 1 to 3 (MKR) the chain is Cytoplasmic. Residues 4–21 (LLFVLIALLAMLQYRLWL) traverse the membrane as a helical segment. Topologically, residues 22 to 98 (GDKSLADSFH…GGERGGVPEN (77 aa)) are periplasmic. A coiled-coil region spans residues 31 to 74 (HLQEQIKLQQQSNAQLVARNQVLREEISDLRSGTEALEERARNE).

This sequence belongs to the FtsB family. Part of a complex composed of FtsB, FtsL and FtsQ.

The protein localises to the cell inner membrane. Essential cell division protein. May link together the upstream cell division proteins, which are predominantly cytoplasmic, with the downstream cell division proteins, which are predominantly periplasmic. This chain is Cell division protein FtsB, found in Shewanella pealeana (strain ATCC 700345 / ANG-SQ1).